The primary structure comprises 642 residues: Frizzled and smoothened-like protein B (642 aa).

The first 26 residues, 1-26, serve as a signal peptide directing secretion; sequence MFNKNNNNNKIIIILKLFLIILIVNN. The Extracellular portion of the chain corresponds to 27–264; it reads NNNIKTFGLN…KWHQMYNMSK (238 aa). Positions 47–197 constitute an FZ domain; the sequence is DPTATCSNYI…GFFPVPCSDP (151 aa). Disulfide bonds link C52-C123, C65-C116, and C143-C194. N-linked (GlcNAc...) asparagine glycans are attached at residues N80, N153, N162, N177, N203, N222, and N261. The chain crosses the membrane as a helical span at residues 265–285; sequence ILSTISFVCSIYNVLTFGILN. At 286–294 the chain is on the cytoplasmic side; sequence HRRSKYNYC. The helical transmembrane segment at 295-315 threads the bilayer; the sequence is ITFFSASVIIITMMDIVTYGI. Residues 316–344 are Extracellular-facing; sequence GYEKLLCPEPGRFAVQSDVSCGATGALFH. A helical transmembrane segment spans residues 345 to 365; sequence IGITNGVFWWTTMSICLFAVV. Residues 366–375 lie on the Cytoplasmic side of the membrane; the sequence is KRIKLFDFRY. The chain crosses the membrane as a helical span at residues 376-398; that stretch reads FIIFNTTASLISVIIPLAGNAFM. The Extracellular segment spans residues 399–416; sequence AGTGSLACWIRKTWYVNS. Residues 417–437 traverse the membrane as a helical segment; the sequence is VFWIPCGIALTIGSVCIILVI. The Cytoplasmic segment spans residues 438–460; the sequence is YEIYKITKNVSTKDNRMILLQIK. A helical transmembrane segment spans residues 461 to 481; it reads PFLCVTLVGGSFYYLFIFNFD. Residue N482 is glycosylated (N-linked (GlcNAc...) asparagine). Over 482–514 the chain is Extracellular; the sequence is NESHSKEYKEKVVDYVMCLLSDTGKECLMAGPN. The helical transmembrane segment at 515-535 threads the bilayer; sequence YVAYFVFYFFIRLFGITFFCI. At 536–642 the chain is on the cytoplasmic side; that stretch reads YGTSQNARDI…INSASNTSSD (107 aa). The disordered stretch occupies residues 578-642; it reads GTNPTSNSKN…INSASNTSSD (65 aa). The span at 583-598 shows a compositional bias: low complexity; it reads SNSKNSKNNQNNQNNN. Positions 584-611 form a coiled coil; sequence NSKNSKNNQNNQNNNSRKEFESKNIELE. Over residues 599-609 the composition is skewed to basic and acidic residues; it reads SRKEFESKNIE. Polar residues-rich tracts occupy residues 614 to 623 and 632 to 642; these read ESISKGQTTR and NINSASNTSSD.

Belongs to the G-protein coupled receptor Fz/Smo family.

The protein resides in the membrane. This chain is Frizzled and smoothened-like protein B (fslB), found in Dictyostelium discoideum (Social amoeba).